Reading from the N-terminus, the 158-residue chain is Lipoprotein signal peptidase (158 aa).

Helical transmembrane passes span Leu7–Val27, Ile38–Phe58, Trp67–Glu87, and Gly95–Val115. Catalysis depends on residues Asp116 and Asp132. Residues Phe125 to Ala145 form a helical membrane-spanning segment.

This sequence belongs to the peptidase A8 family.

It localises to the cell inner membrane. The catalysed reaction is Release of signal peptides from bacterial membrane prolipoproteins. Hydrolyzes -Xaa-Yaa-Zaa-|-(S,diacylglyceryl)Cys-, in which Xaa is hydrophobic (preferably Leu), and Yaa (Ala or Ser) and Zaa (Gly or Ala) have small, neutral side chains.. It functions in the pathway protein modification; lipoprotein biosynthesis (signal peptide cleavage). In terms of biological role, this protein specifically catalyzes the removal of signal peptides from prolipoproteins. This Trichormus variabilis (strain ATCC 29413 / PCC 7937) (Anabaena variabilis) protein is Lipoprotein signal peptidase.